The primary structure comprises 455 residues: C4-dicarboxylate transport protein (455 aa).

8 helical membrane passes run 20 to 40 (HLYF…HFYP), 59 to 79 (MIIA…MGTL), 91 to 111 (GYFL…ANVI), 160 to 180 (GNIL…ILIG), 209 to 229 (PIGA…ASVV), 231 to 251 (LATL…VVLG), 344 to 364 (LLLV…AGFI), and 367 to 387 (AATL…ILGV).

This sequence belongs to the dicarboxylate/amino acid:cation symporter (DAACS) (TC 2.A.23) family.

It localises to the cell inner membrane. Its function is as follows. Responsible for the transport of dicarboxylates such as succinate, fumarate, and malate from the periplasm across the membrane. This is C4-dicarboxylate transport protein from Paracoccus denitrificans (strain Pd 1222).